The chain runs to 396 residues: Cytochrome b (396 aa).

4 helical membrane-spanning segments follow: residues 37-57 (FGSL…ILAM), 81-102 (WLMR…YAHI), 117-137 (WNVG…GYVL), and 182-202 (FFTF…IHIM). The heme b site is built by H87 and H101. The heme b site is built by H186 and H200. Residue H205 participates in a ubiquinone binding. The next 4 helical transmembrane spans lie at 230–250 (FKDI…SLLA), 292–312 (LGGV…PFTH), 324–344 (LAQI…WLGG), and 351–371 (FILM…LVFP).

It belongs to the cytochrome b family. In terms of assembly, the cytochrome bc1 complex contains 3 respiratory subunits (MT-CYB, CYC1 and UQCRFS1), 2 core proteins (UQCRC1 and UQCRC2) and probably 6 low-molecular weight proteins. The cofactor is heme b.

The protein localises to the mitochondrion inner membrane. In terms of biological role, component of the ubiquinol-cytochrome c reductase complex (complex III or cytochrome b-c1 complex) that is part of the mitochondrial respiratory chain. The b-c1 complex mediates electron transfer from ubiquinol to cytochrome c. Contributes to the generation of a proton gradient across the mitochondrial membrane that is then used for ATP synthesis. This is Cytochrome b (mt-cyb) from Petromyzon marinus (Sea lamprey).